Reading from the N-terminus, the 157-residue chain is SsrA-binding protein (157 aa).

This sequence belongs to the SmpB family.

The protein localises to the cytoplasm. Functionally, required for rescue of stalled ribosomes mediated by trans-translation. Binds to transfer-messenger RNA (tmRNA), required for stable association of tmRNA with ribosomes. tmRNA and SmpB together mimic tRNA shape, replacing the anticodon stem-loop with SmpB. tmRNA is encoded by the ssrA gene; the 2 termini fold to resemble tRNA(Ala) and it encodes a 'tag peptide', a short internal open reading frame. During trans-translation Ala-aminoacylated tmRNA acts like a tRNA, entering the A-site of stalled ribosomes, displacing the stalled mRNA. The ribosome then switches to translate the ORF on the tmRNA; the nascent peptide is terminated with the 'tag peptide' encoded by the tmRNA and targeted for degradation. The ribosome is freed to recommence translation, which seems to be the essential function of trans-translation. The sequence is that of SsrA-binding protein from Syntrophomonas wolfei subsp. wolfei (strain DSM 2245B / Goettingen).